The sequence spans 89 residues: Class I hydrophobin C (89 aa).

The signal sequence occupies residues 1–16 (MKFSLATIALAAAVAA). 4 cysteine pairs are disulfide-bonded: cysteine 28–cysteine 68, cysteine 39–cysteine 60, cysteine 40–cysteine 52, and cysteine 69–cysteine 85. Residue asparagine 36 is glycosylated (N-linked (GlcNAc...) asparagine).

The protein belongs to the fungal hydrophobin family.

It is found in the secreted. The protein localises to the cell wall. Its subcellular location is the vacuole. The protein resides in the cytoplasmic vesicle. Its function is as follows. Aerial growth, conidiation, and dispersal of filamentous fungi in the environment rely upon a capability of their secreting small amphipathic proteins called hydrophobins (HPBs) with low sequence identity. Class I can self-assemble into an outermost layer of rodlet bundles on aerial cell surfaces, conferring cellular hydrophobicity that supports fungal growth, development and dispersal; whereas Class II form highly ordered films at water-air interfaces through intermolecular interactions but contribute nothing to the rodlet structure. Hyd1C contributes to certain cell wall-related features, such as hydrophobicity but is not involved in cell wall-related events during fungal proliferation in host hemocoel. Does not contribute to conidial hydrophobicity. This is Class I hydrophobin C from Beauveria bassiana (strain ARSEF 2860) (White muscardine disease fungus).